Here is an 832-residue protein sequence, read N- to C-terminus: DNA polymerase I, thermostable (832 aa).

Positions arginine 175 to lysine 260 constitute a 5'-3' exonuclease domain. A polymerase region spans residues glutamate 410–glutamate 832.

Belongs to the DNA polymerase type-A family.

It carries out the reaction DNA(n) + a 2'-deoxyribonucleoside 5'-triphosphate = DNA(n+1) + diphosphate. In addition to polymerase activity, this DNA polymerase exhibits 5'-3' exonuclease activity. Unlikely to have 3'-5' exonuclease activity due to absence of a 3'-5' exonuclease domain. This Thermus aquaticus protein is DNA polymerase I, thermostable (polA).